Reading from the N-terminus, the 353-residue chain is Probable dual-specificity RNA methyltransferase RlmN (353 aa).

E95 functions as the Proton acceptor in the catalytic mechanism. Residues 103–333 enclose the Radical SAM core domain; sequence DGGRKTICIS…PILNRRSPGR (231 aa). A disulfide bridge connects residues C110 and C339. C117, C121, and C124 together coordinate [4Fe-4S] cluster. Residues 164–165, S196, 219–221, and N296 each bind S-adenosyl-L-methionine; these read GE and SLN. C339 serves as the catalytic S-methylcysteine intermediate.

This sequence belongs to the radical SAM superfamily. RlmN family. It depends on [4Fe-4S] cluster as a cofactor.

It is found in the cytoplasm. It catalyses the reaction adenosine(2503) in 23S rRNA + 2 reduced [2Fe-2S]-[ferredoxin] + 2 S-adenosyl-L-methionine = 2-methyladenosine(2503) in 23S rRNA + 5'-deoxyadenosine + L-methionine + 2 oxidized [2Fe-2S]-[ferredoxin] + S-adenosyl-L-homocysteine. The enzyme catalyses adenosine(37) in tRNA + 2 reduced [2Fe-2S]-[ferredoxin] + 2 S-adenosyl-L-methionine = 2-methyladenosine(37) in tRNA + 5'-deoxyadenosine + L-methionine + 2 oxidized [2Fe-2S]-[ferredoxin] + S-adenosyl-L-homocysteine. Functionally, specifically methylates position 2 of adenine 2503 in 23S rRNA and position 2 of adenine 37 in tRNAs. In Leptospira biflexa serovar Patoc (strain Patoc 1 / Ames), this protein is Probable dual-specificity RNA methyltransferase RlmN.